Reading from the N-terminus, the 90-residue chain is DNA/RNA-binding protein Alba (90 aa).

Position 11 is an N6-acetyllysine (Lys-11).

Belongs to the histone-like Alba family. Post-translationally, acetylated. Acetylation at Lys-11 decreases DNA-binding affinity.

It is found in the cytoplasm. It localises to the chromosome. Binds double-stranded DNA tightly but without sequence specificity. Involved in DNA compaction. In Picrophilus torridus (strain ATCC 700027 / DSM 9790 / JCM 10055 / NBRC 100828 / KAW 2/3), this protein is DNA/RNA-binding protein Alba.